The following is a 314-amino-acid chain: Lipoyl synthase (314 aa).

Residues Cys67, Cys72, Cys78, Cys93, Cys97, Cys100, and Ser306 each contribute to the [4Fe-4S] cluster site. The Radical SAM core domain maps to Phe79 to Lys295.

The protein belongs to the radical SAM superfamily. Lipoyl synthase family. The cofactor is [4Fe-4S] cluster.

It is found in the cytoplasm. The enzyme catalyses [[Fe-S] cluster scaffold protein carrying a second [4Fe-4S](2+) cluster] + N(6)-octanoyl-L-lysyl-[protein] + 2 oxidized [2Fe-2S]-[ferredoxin] + 2 S-adenosyl-L-methionine + 4 H(+) = [[Fe-S] cluster scaffold protein] + N(6)-[(R)-dihydrolipoyl]-L-lysyl-[protein] + 4 Fe(3+) + 2 hydrogen sulfide + 2 5'-deoxyadenosine + 2 L-methionine + 2 reduced [2Fe-2S]-[ferredoxin]. The protein operates within protein modification; protein lipoylation via endogenous pathway; protein N(6)-(lipoyl)lysine from octanoyl-[acyl-carrier-protein]: step 2/2. Catalyzes the radical-mediated insertion of two sulfur atoms into the C-6 and C-8 positions of the octanoyl moiety bound to the lipoyl domains of lipoate-dependent enzymes, thereby converting the octanoylated domains into lipoylated derivatives. In Buchnera aphidicola subsp. Baizongia pistaciae (strain Bp), this protein is Lipoyl synthase.